The sequence spans 1115 residues: Serine/threonine-protein kinase/endoribonuclease IRE1 (1115 aa).

The first 18 residues, 1 to 18 (MRLLRRNMLVLTLLVCVF), serve as a signal peptide directing secretion. The Lumenal portion of the chain corresponds to 19–526 (SSIISCSIPL…RELDEKNQNS (508 aa)). 4 N-linked (GlcNAc...) asparagine glycosylation sites follow: Asn111, Asn213, Asn298, and Asn397. The helical transmembrane segment at 527 to 555 (LLLKFGSLVYRIIETGVFLLLFLIFCAIL) threads the bilayer. The Cytoplasmic segment spans residues 556-1115 (QRFKILPPLY…DQILREFLYS (560 aa)). The interval 617-658 (GSLKSEKDNDDADEDDEKSLDLTTEKKKRKRGSRGGKKGRKS) is disordered. Residues 624–634 (DNDDADEDDEK) are compositionally biased toward acidic residues. The segment covering 642 to 658 (KKKRKRGSRGGKKGRKS) has biased composition (basic residues). The Protein kinase domain occupies 674 to 980 (VVSEKILGYG…AMKVLRHPLF (307 aa)). Ser684, Lys702, Glu746, Cys748, and Asn751 together coordinate ADP. The active-site Proton acceptor is the Asp797. 2 residues coordinate Mg(2+): Asn802 and Asp828. A phosphoserine; by autocatalysis mark is found at Ser840 and Ser841. Thr844 is subject to Phosphothreonine; by autocatalysis. The 133-residue stretch at 983 to 1115 (KSKKLEFLLK…DQILREFLYS (133 aa)) folds into the KEN domain.

This sequence belongs to the protein kinase superfamily. Ser/Thr protein kinase family. In terms of assembly, homodimer; in response to the accumulation of unfolded proteins. Dimerization of lumenal domains help position the cytoplasmic kinase domains optimally for autophosphorylation to initiate the unfolded protein response. Dimerization of the kinase domain is important for ribonuclease activity. Interacts (when phosphorylated) with PTC2; the interaction is direct and serves to attenuate the endoplasmic reticulum unfolded protein response. Mg(2+) is required as a cofactor. Post-translationally, autophosphorylated mainly on serine residues; phosphorylation enables nucleotide binding by the active site.

It is found in the endoplasmic reticulum membrane. The catalysed reaction is L-seryl-[protein] + ATP = O-phospho-L-seryl-[protein] + ADP + H(+). It carries out the reaction L-threonyl-[protein] + ATP = O-phospho-L-threonyl-[protein] + ADP + H(+). The kinase domain is activated by trans-autophosphorylation. Kinase activity is required for activation of the endoribonuclease domain. Inactivated by dephosphorylation via recruitment of PTC2. Senses unfolded proteins in the lumen of the endoplasmic reticulum via its N-terminal domain which leads to enzyme auto-activation. The active endoribonuclease domain splices HAC1 precursor mRNA to produce the mature form which then induces transcription of UPR target genes. The protein is Serine/threonine-protein kinase/endoribonuclease IRE1 (IRE1) of Saccharomyces cerevisiae (strain ATCC 204508 / S288c) (Baker's yeast).